Reading from the N-terminus, the 238-residue chain is tRNA (guanine-N(7)-)-methyltransferase (238 aa).

4 residues coordinate S-adenosyl-L-methionine: Glu-68, Glu-93, Asp-120, and Asp-143. Asp-143 is a catalytic residue. Residues Lys-147, Asp-179, and Thr-216–Glu-219 contribute to the substrate site.

This sequence belongs to the class I-like SAM-binding methyltransferase superfamily. TrmB family.

It catalyses the reaction guanosine(46) in tRNA + S-adenosyl-L-methionine = N(7)-methylguanosine(46) in tRNA + S-adenosyl-L-homocysteine. It participates in tRNA modification; N(7)-methylguanine-tRNA biosynthesis. In terms of biological role, catalyzes the formation of N(7)-methylguanine at position 46 (m7G46) in tRNA. In Aliivibrio salmonicida (strain LFI1238) (Vibrio salmonicida (strain LFI1238)), this protein is tRNA (guanine-N(7)-)-methyltransferase.